We begin with the raw amino-acid sequence, 72 residues long: ATP synthase subunit c (72 aa).

The next 2 helical transmembrane spans lie at 1–21 (MSLGVIAAAIAIGLSALGAGI) and 49–69 (FIGVALVEALPIIGVVIAFIV).

Belongs to the ATPase C chain family. F-type ATPases have 2 components, F(1) - the catalytic core - and F(0) - the membrane proton channel. F(1) has five subunits: alpha(3), beta(3), gamma(1), delta(1), epsilon(1). F(0) has three main subunits: a(1), b(2) and c(10-14). The alpha and beta chains form an alternating ring which encloses part of the gamma chain. F(1) is attached to F(0) by a central stalk formed by the gamma and epsilon chains, while a peripheral stalk is formed by the delta and b chains.

Its subcellular location is the cell membrane. Its function is as follows. F(1)F(0) ATP synthase produces ATP from ADP in the presence of a proton or sodium gradient. F-type ATPases consist of two structural domains, F(1) containing the extramembraneous catalytic core and F(0) containing the membrane proton channel, linked together by a central stalk and a peripheral stalk. During catalysis, ATP synthesis in the catalytic domain of F(1) is coupled via a rotary mechanism of the central stalk subunits to proton translocation. Functionally, key component of the F(0) channel; it plays a direct role in translocation across the membrane. A homomeric c-ring of between 10-14 subunits forms the central stalk rotor element with the F(1) delta and epsilon subunits. This is ATP synthase subunit c from Bacillus anthracis (strain A0248).